A 235-amino-acid polypeptide reads, in one-letter code: Pyridoxine/pyridoxamine 5'-phosphate oxidase (235 aa).

Substrate-binding positions include 30-33 (RQEY) and Lys-88. FMN is bound by residues 83–88 (RTVLLK), 98–99 (YT), Arg-104, Lys-105, and Gln-127. 3 residues coordinate substrate: Tyr-145, Arg-149, and Ser-153. FMN-binding positions include 162–163 (QS) and Trp-207. A substrate-binding site is contributed by 213-215 (RLH). Arg-217 serves as a coordination point for FMN.

It belongs to the pyridoxamine 5'-phosphate oxidase family. Homodimer. FMN serves as cofactor.

It carries out the reaction pyridoxamine 5'-phosphate + O2 + H2O = pyridoxal 5'-phosphate + H2O2 + NH4(+). The enzyme catalyses pyridoxine 5'-phosphate + O2 = pyridoxal 5'-phosphate + H2O2. The protein operates within cofactor metabolism; pyridoxal 5'-phosphate salvage; pyridoxal 5'-phosphate from pyridoxamine 5'-phosphate: step 1/1. It participates in cofactor metabolism; pyridoxal 5'-phosphate salvage; pyridoxal 5'-phosphate from pyridoxine 5'-phosphate: step 1/1. Functionally, catalyzes the oxidation of either pyridoxine 5'-phosphate (PNP) or pyridoxamine 5'-phosphate (PMP) into pyridoxal 5'-phosphate (PLP). The chain is Pyridoxine/pyridoxamine 5'-phosphate oxidase from Bacteroides fragilis (strain YCH46).